Consider the following 339-residue polypeptide: Protein RecA (339 aa).

Gly-73–Thr-80 provides a ligand contact to ATP.

This sequence belongs to the RecA family.

It is found in the cytoplasm. Functionally, can catalyze the hydrolysis of ATP in the presence of single-stranded DNA, the ATP-dependent uptake of single-stranded DNA by duplex DNA, and the ATP-dependent hybridization of homologous single-stranded DNAs. It interacts with LexA causing its activation and leading to its autocatalytic cleavage. The chain is Protein RecA from Mycoplasmopsis pulmonis (strain UAB CTIP) (Mycoplasma pulmonis).